Consider the following 302-residue polypeptide: tRNA dimethylallyltransferase (302 aa).

7 to 14 (GPTASGKS) contributes to the ATP binding site. 9–14 (TASGKS) contributes to the substrate binding site. Interaction with substrate tRNA regions lie at residues 32-35 (DSMQ) and 156-160 (QRILR).

Belongs to the IPP transferase family. As to quaternary structure, monomer. Mg(2+) serves as cofactor.

The enzyme catalyses adenosine(37) in tRNA + dimethylallyl diphosphate = N(6)-dimethylallyladenosine(37) in tRNA + diphosphate. Catalyzes the transfer of a dimethylallyl group onto the adenine at position 37 in tRNAs that read codons beginning with uridine, leading to the formation of N6-(dimethylallyl)adenosine (i(6)A). The sequence is that of tRNA dimethylallyltransferase from Beijerinckia indica subsp. indica (strain ATCC 9039 / DSM 1715 / NCIMB 8712).